A 123-amino-acid polypeptide reads, in one-letter code: Ribosome-binding factor A (123 aa).

This sequence belongs to the RbfA family. As to quaternary structure, monomer. Binds 30S ribosomal subunits, but not 50S ribosomal subunits or 70S ribosomes.

The protein localises to the cytoplasm. Its function is as follows. One of several proteins that assist in the late maturation steps of the functional core of the 30S ribosomal subunit. Associates with free 30S ribosomal subunits (but not with 30S subunits that are part of 70S ribosomes or polysomes). Required for efficient processing of 16S rRNA. May interact with the 5'-terminal helix region of 16S rRNA. The polypeptide is Ribosome-binding factor A (Solibacter usitatus (strain Ellin6076)).